Reading from the N-terminus, the 300-residue chain is U6 snRNA methylphosphate capping enzyme Amus (300 aa).

The segment covering 1–12 (MDLENNNNTPLT) has biased composition (polar residues). 2 disordered regions span residues 1-21 (MDLE…KCAK) and 34-68 (VESK…GKPM). Residues 34–44 (VESKRLKKEES) are compositionally biased toward basic and acidic residues. Residues 95–300 (DIRLDVLGTQ…KRPIQIFTKS (206 aa)) form the Bin3-type SAM domain. S-adenosyl-L-methionine-binding residues include Asn-119 and Asp-140.

Belongs to the methyltransferase superfamily.

The protein resides in the nucleus. Probable S-adenosyl-L-methionine-dependent methyltransferase that binds and stabilizes U6 snRNA, probably by adding a methylphosphate cap at its 5'-end. Required for U6 stability, but not stability of 7SK snRNAs, other miRNAs or tRNAs. U6 stabilization is required for efficient pre-mRNA splicing. Essential for organismal and germline development. This chain is U6 snRNA methylphosphate capping enzyme Amus, found in Drosophila melanogaster (Fruit fly).